Reading from the N-terminus, the 1116-residue chain is MQMAQFLSLVRGDSIESPREITSPSNLISESGSNGWLIRFFDSSFFCEWIAVSYLYKHQHSGVRDYLCNRMYTLPLSGIESYLFQICYLMVHKPSPSLDKFVIDICAKSLKIALKVHWFLLAELEDSDDNEGISRIQEKCQIAATLVGEWSPLMRPHNEPSTPGSKVLNKFLSSKQKLFSLTLSPPTQKSLLFSPTSGSNLQDDGSQLSADDNKIFKRLIPSPKVRDALLFRKSADKEDEECEKDGFFKRLLRDSRGEDDEQRSNSEGFFKRLLKDNKSEEEEISNNSEGFFKRLRSSKGDEEELTSSSDGFFKRLLRDNKGDEEELGANSEGFFKKLLRDSKNEDEEPNANTEGFFKKLFHESKNEDDKVSNAVDDEEKDGFLKKLFKEKFDEKRNGNERNETDETVYTDETSGEDNGREGFFKKLFKEKFEDKPNIGKADDGNESEDDESSEFSLFRRLFRRHPEDVKTTLPSENCSNGGFVESSPGTENFFRKLFRDRDRSVEDSELFGSKKYKEKCPGSPKPQNNTPSKKPPLPNNTAAQFRKGSYHESLEFVHALCETSYDLVDIFPIEDRKTALRESIAEINSHLAQAETTGGICFPMGRGVYRVVNIPEDEYVLLNSREKVPYMICVEVLKAETPCGAKTTSTSLKLSKGGIPLANGDAFLHKPPPWAYPLSTAQEVYRNSADRMSLSTVEAIDQAMTHKSEVKLVNACLSVETHSNSNTKSVSSGVTGVLRTGLESDLEWVRLVLTADPGLRMESITDPKTPRRKEHRRVSSIVAYEEVRAAAAKGEAPPGLPLKGAGQDSSDAQPMANGGMLKAGDALSGEFWEGKRLRIRKDSIYGNLPGWDLRSIIVKSGDDCRQEHLAVQLISHFFDIFQEAGLPLWLRPYEVLVTSSYTALIETIPDTASIHSIKSRYPNITSLRDFFDAKFKENSPSFKLAQRNFVESMAGYSLVCYLLQIKDRHNGNLLMDEEGHIIHIDFGFMLSNSPGGVNFESAPFKLTRELLEVMDSDAEGLPSEFFDYFKVLCIQGFLTCRKHAERIILLVEMLQDSGFPCFKGGPRTIQNLRKRFHLSLTEEQCVSLVLSLISSSLDAWRTRQYDYYQRVLNGIR.

The 143-residue stretch at Met-1–Ala-143 folds into the PIK helical domain. Tandem repeats lie at residues Ala-210–Leu-229, Cys-242–Glu-261, Ser-264–Glu-283, Asn-286–Glu-304, Ser-307–Glu-326, Ala-329–Glu-348, Ala-351–Lys-370, and Glu-378–Arg-396. The interval Ala-210–Asp-507 is 11 X 20 AA approximate repeats (PPC). The segment covering Glu-394 to Thr-404 has biased composition (basic and acidic residues). Residues Glu-394–Asp-417 form a disordered region. Positions Asp-405 to Gly-415 are enriched in acidic residues. Copy 9 of the repeat occupies Asn-418–Pro-436. Phosphoserine is present on residues Ser-447 and Ser-452. 2 repeat units span residues Ser-452–Lys-470 and Pro-488–Asp-507. Disordered stretches follow at residues Lys-515–Asn-540 and Gly-794–Gln-813. Residues Glu-830–Arg-1101 form the PI3K/PI4K catalytic domain. The G-loop stretch occupies residues Arg-836–Asp-842. Residues Gln-964–Asn-972 are catalytic loop. The segment at His-983–Thr-1007 is activation loop.

Belongs to the PI3/PI4-kinase family. Type III PI4K subfamily.

The protein localises to the cell membrane. It localises to the golgi apparatus. The protein resides in the trans-Golgi network. Its subcellular location is the cytoplasmic vesicle membrane. It carries out the reaction a 1,2-diacyl-sn-glycero-3-phospho-(1D-myo-inositol) + ATP = a 1,2-diacyl-sn-glycero-3-phospho-(1D-myo-inositol 4-phosphate) + ADP + H(+). Its function is as follows. Acts on phosphatidylinositol (PtdIns) in the first committed step in the production of the second messenger inositol-1,4,5-trisphosphate. Necessary for proper organization of the trans-Golgi network (TGN) and post-Golgi secretion in root hairs. Together with PI4KB1, required during polarized root hair expansion and pollen tube elongation. Functions redundantly with PI4KB1 upstream of the cold response phosphoinositide-dependent phospholipase C (PI-PLC) pathway. The protein is Phosphatidylinositol 4-kinase beta 2 (PI4KB2) of Arabidopsis thaliana (Mouse-ear cress).